The sequence spans 193 residues: Putative RNA methyltransferase At5g10620 (193 aa).

Residues Leu-110, Gly-142, and 161 to 166 (LSSMVL) contribute to the S-adenosyl-L-methionine site.

It belongs to the RNA methyltransferase RlmH family.

This chain is Putative RNA methyltransferase At5g10620, found in Arabidopsis thaliana (Mouse-ear cress).